The following is a 441-amino-acid chain: Diuretic hormone receptor (441 aa).

3 N-linked (GlcNAc...) asparagine glycosylation sites follow: Asn99, Asn107, and Asn112. The helical transmembrane segment at 135 to 158 (FVFFVGFCLSLVAIAVAIWIFLYF) threads the bilayer. Residues 159–166 (KDLRCLRN) are Cytoplasmic-facing. The helical transmembrane segment at 167–187 (TIHTNLMATYICNDATWIISA) threads the bilayer. Residues 188 to 194 (VVQEYVE) lie on the Extracellular side of the membrane. The helical transmembrane segment at 195–224 (NGGLCSVLAVLMHYFYLTNFFWMFVEGLYL) threads the bilayer. Residues 225–238 (FLLVVATFTGEKVK) are Cytoplasmic-facing. A helical membrane pass occupies residues 239 to 260 (LQIYIIIGWGIPGVIVVTWAII). The Extracellular portion of the chain corresponds to 261–291 (KHLGKTAPDNAGESHPMVLLIKHCPWMAEDY). The chain crosses the membrane as a helical span at residues 292 to 315 (FDWIHQAPVITVLAVNLVFLFSIM). Over 316-338 (WVLITKLQSANTAETQQYRKATK) the chain is Cytoplasmic. The chain crosses the membrane as a helical span at residues 339–357 (ALLVLFPLLGITYILMMQG). Over 358–371 (PMDGVAGHVFRNAQ) the chain is Extracellular. Residues 372–391 (ALLLSLQGFTVALFYCFLNT) form a helical membrane-spanning segment. Residues 392–441 (EVQNTLRHRMSRWRETRTVGGGRRYTLSGHSKDWSPRSRTESIRCLQHRS) lie on the Cytoplasmic side of the membrane.

The protein belongs to the G-protein coupled receptor 2 family. As to expression, expressed in Malpighian tubules.

Its subcellular location is the cell membrane. Functionally, receptor for the insect diurectic hormone. The activity of this receptor is mediated by G proteins which activate adenylyl cyclase. The polypeptide is Diuretic hormone receptor (Acheta domesticus (House cricket)).